Consider the following 285-residue polypeptide: N(G),N(G)-dimethylarginine dimethylaminohydrolase 1 (285 aa).

Ala2 carries the post-translational modification N-acetylalanine. Leu30 contributes to the substrate binding site. The residue at position 33 (Ser33) is a Phosphoserine. Asp73, Glu78, Asp79, Arg98, and Arg145 together coordinate substrate. His173 (proton donor) is an active-site residue. Cys222 is modified (S-nitrosocysteine). Val268 contacts substrate. At Cys274 the chain carries S-nitrosocysteine. Residue Cys274 is the Nucleophile of the active site. Residue Cys274 participates in Zn(2+) binding.

Belongs to the DDAH family. Monomer. In terms of tissue distribution, detected in skeletal muscle, lung, heart, liver, kidney and brain (at protein level).

The catalysed reaction is N(omega),N(omega)-dimethyl-L-arginine + H2O = dimethylamine + L-citrulline. The enzyme catalyses N(omega)-methyl-L-arginine + H2O = L-citrulline + methylamine. With respect to regulation, inhibited by zinc ions. Its function is as follows. Hydrolyzes N(G),N(G)-dimethyl-L-arginine (ADMA) and N(G)-monomethyl-L-arginine (MMA) which act as inhibitors of NOS. Has therefore a role in the regulation of nitric oxide generation. This chain is N(G),N(G)-dimethylarginine dimethylaminohydrolase 1 (Ddah1), found in Mus musculus (Mouse).